Here is a 207-residue protein sequence, read N- to C-terminus: FMN-dependent NADH:quinone oxidoreductase 2 (207 aa).

FMN is bound by residues Ser9, 15–17 (SAS), and 97–100 (MWNF).

This sequence belongs to the azoreductase type 1 family. Homodimer. FMN is required as a cofactor.

The enzyme catalyses 2 a quinone + NADH + H(+) = 2 a 1,4-benzosemiquinone + NAD(+). It carries out the reaction N,N-dimethyl-1,4-phenylenediamine + anthranilate + 2 NAD(+) = 2-(4-dimethylaminophenyl)diazenylbenzoate + 2 NADH + 2 H(+). Its function is as follows. Quinone reductase that provides resistance to thiol-specific stress caused by electrophilic quinones. Functionally, also exhibits azoreductase activity. Catalyzes the reductive cleavage of the azo bond in aromatic azo compounds to the corresponding amines. The chain is FMN-dependent NADH:quinone oxidoreductase 2 from Burkholderia lata (strain ATCC 17760 / DSM 23089 / LMG 22485 / NCIMB 9086 / R18194 / 383).